The chain runs to 434 residues: Probable carboxypeptidase BDCG_03757 (434 aa).

Residues M1–A20 form the signal peptide. N-linked (GlcNAc...) asparagine glycosylation is found at N136 and N150. D160 lines the Zn(2+) pocket. The active-site Proton acceptor is E192. Zn(2+) is bound at residue E193. N343 carries N-linked (GlcNAc...) asparagine glycosylation.

Belongs to the peptidase M20A family. The cofactor is Zn(2+).

It is found in the secreted. This Ajellomyces dermatitidis (strain ER-3 / ATCC MYA-2586) (Blastomyces dermatitidis) protein is Probable carboxypeptidase BDCG_03757.